Reading from the N-terminus, the 352-residue chain is N-acetyl-gamma-glutamyl-phosphate reductase (352 aa).

Cysteine 155 is a catalytic residue.

It belongs to the NAGSA dehydrogenase family. Type 1 subfamily.

The protein localises to the cytoplasm. The catalysed reaction is N-acetyl-L-glutamate 5-semialdehyde + phosphate + NADP(+) = N-acetyl-L-glutamyl 5-phosphate + NADPH + H(+). It functions in the pathway amino-acid biosynthesis; L-arginine biosynthesis; N(2)-acetyl-L-ornithine from L-glutamate: step 3/4. Its function is as follows. Catalyzes the NADPH-dependent reduction of N-acetyl-5-glutamyl phosphate to yield N-acetyl-L-glutamate 5-semialdehyde. In Crocosphaera subtropica (strain ATCC 51142 / BH68) (Cyanothece sp. (strain ATCC 51142)), this protein is N-acetyl-gamma-glutamyl-phosphate reductase.